A 437-amino-acid polypeptide reads, in one-letter code: O-antigen export system ATP-binding protein RfbB (437 aa).

One can recognise an ABC transporter domain in the interval 37 to 256 (LRGKRQSRDA…YREAISLAEA (220 aa)). Position 69 to 76 (69 to 76 (GRNGSGKS)) interacts with ATP.

This sequence belongs to the ABC transporter superfamily.

It is found in the cell inner membrane. In terms of biological role, may form an ATP-driven O-antigen export apparatus, in association with RfbA. The protein is O-antigen export system ATP-binding protein RfbB (rfbB) of Myxococcus xanthus.